The chain runs to 127 residues: Fluoride-specific ion channel FluC (127 aa).

Transmembrane regions (helical) follow at residues 4 to 24, 39 to 59, 68 to 88, and 102 to 122; these read LDYLTIAFGGAIGAVLRYLVS, GTIIVNSVGSFFLSFLMFAAI, AILFFGTGLLGAFTTFSTFTY, and VAYALANLLFAFTCAYFGMIL. Residues Gly-78 and Thr-81 each coordinate Na(+).

It belongs to the fluoride channel Fluc/FEX (TC 1.A.43) family.

It is found in the cell inner membrane. The catalysed reaction is fluoride(in) = fluoride(out). With respect to regulation, na(+) is not transported, but it plays an essential structural role and its presence is essential for fluoride channel function. In terms of biological role, fluoride-specific ion channel. Important for reducing fluoride concentration in the cell, thus reducing its toxicity. The sequence is that of Fluoride-specific ion channel FluC from Thermotoga maritima (strain ATCC 43589 / DSM 3109 / JCM 10099 / NBRC 100826 / MSB8).